Reading from the N-terminus, the 371-residue chain is uncharacterized protein (371 aa).

Gly-33–Thr-40 is an ATP binding site.

The protein belongs to the archaeal ATPase family.

This is an uncharacterized protein from Methanocaldococcus jannaschii (strain ATCC 43067 / DSM 2661 / JAL-1 / JCM 10045 / NBRC 100440) (Methanococcus jannaschii).